Here is a 395-residue protein sequence, read N- to C-terminus: S-adenosylmethionine synthase (395 aa).

An ATP-binding site is contributed by His16. Residue Asp18 participates in Mg(2+) binding. Glu44 contributes to the K(+) binding site. L-methionine is bound by residues Glu57 and Gln100. Residues 100-110 (QSPDIAQGVDD) are flexible loop. Residues 174-176 (DAK), 241-242 (RF), Asp250, 256-257 (RK), Ala273, and Lys277 each bind ATP. Asp250 provides a ligand contact to L-methionine. Lys281 contacts L-methionine.

Belongs to the AdoMet synthase family. As to quaternary structure, homotetramer; dimer of dimers. Requires Mg(2+) as cofactor. The cofactor is K(+).

Its subcellular location is the cytoplasm. The catalysed reaction is L-methionine + ATP + H2O = S-adenosyl-L-methionine + phosphate + diphosphate. It participates in amino-acid biosynthesis; S-adenosyl-L-methionine biosynthesis; S-adenosyl-L-methionine from L-methionine: step 1/1. Functionally, catalyzes the formation of S-adenosylmethionine (AdoMet) from methionine and ATP. The overall synthetic reaction is composed of two sequential steps, AdoMet formation and the subsequent tripolyphosphate hydrolysis which occurs prior to release of AdoMet from the enzyme. In Limosilactobacillus reuteri (strain DSM 20016) (Lactobacillus reuteri), this protein is S-adenosylmethionine synthase.